The sequence spans 498 residues: ATP synthase subunit beta, chloroplastic (498 aa).

Residue 172–179 participates in ATP binding; it reads GGAGVGKT.

It belongs to the ATPase alpha/beta chains family. In terms of assembly, F-type ATPases have 2 components, CF(1) - the catalytic core - and CF(0) - the membrane proton channel. CF(1) has five subunits: alpha(3), beta(3), gamma(1), delta(1), epsilon(1). CF(0) has four main subunits: a(1), b(1), b'(1) and c(9-12).

The protein localises to the plastid. The protein resides in the chloroplast thylakoid membrane. It carries out the reaction ATP + H2O + 4 H(+)(in) = ADP + phosphate + 5 H(+)(out). In terms of biological role, produces ATP from ADP in the presence of a proton gradient across the membrane. The catalytic sites are hosted primarily by the beta subunits. This Phoenix dactylifera (Date palm) protein is ATP synthase subunit beta, chloroplastic.